A 360-amino-acid polypeptide reads, in one-letter code: Photosystem II protein D1 (360 aa).

3 consecutive transmembrane segments (helical) span residues 29–46, 118–133, and 142–156; these read YIGW…TATS, HFLT…EWEL, and WISV…AAAA. Residue H118 participates in chlorophyll a binding. A pheophytin a-binding site is contributed by Y126. Residues D170 and E189 each contribute to the [CaMn4O5] cluster site. A helical membrane pass occupies residues 197-218; it reads FHQLGVAGVFGGSLFSAMHGSL. H198 provides a ligand contact to chlorophyll a. Residues H215 and 264-265 contribute to the a quinone site; that span reads SF. Fe cation is bound at residue H215. H272 contributes to the Fe cation binding site. Residues 274–288 traverse the membrane as a helical segment; the sequence is FLGLWPVVGIWLTAL. 4 residues coordinate [CaMn4O5] cluster: H332, E333, D342, and A344. Positions 345–360 are excised as a propeptide; it reads SGESLPVALTAPAVNG.

The protein belongs to the reaction center PufL/M/PsbA/D family. PSII is composed of 1 copy each of membrane proteins PsbA, PsbB, PsbC, PsbD, PsbE, PsbF, PsbH, PsbI, PsbJ, PsbK, PsbL, PsbM, PsbT, PsbX, PsbY, PsbZ, Psb30/Ycf12, at least 3 peripheral proteins of the oxygen-evolving complex and a large number of cofactors. It forms dimeric complexes. The cofactor is The D1/D2 heterodimer binds P680, chlorophylls that are the primary electron donor of PSII, and subsequent electron acceptors. It shares a non-heme iron and each subunit binds pheophytin, quinone, additional chlorophylls, carotenoids and lipids. D1 provides most of the ligands for the Mn4-Ca-O5 cluster of the oxygen-evolving complex (OEC). There is also a Cl(-1) ion associated with D1 and D2, which is required for oxygen evolution. The PSII complex binds additional chlorophylls, carotenoids and specific lipids.. Tyr-161 forms a radical intermediate that is referred to as redox-active TyrZ, YZ or Y-Z. In terms of processing, C-terminally processed by CTPA; processing is essential to allow assembly of the oxygen-evolving complex and thus photosynthetic growth.

The protein localises to the plastid. It is found in the chloroplast thylakoid membrane. The catalysed reaction is 2 a plastoquinone + 4 hnu + 2 H2O = 2 a plastoquinol + O2. In terms of biological role, photosystem II (PSII) is a light-driven water:plastoquinone oxidoreductase that uses light energy to abstract electrons from H(2)O, generating O(2) and a proton gradient subsequently used for ATP formation. It consists of a core antenna complex that captures photons, and an electron transfer chain that converts photonic excitation into a charge separation. The D1/D2 (PsbA/PsbD) reaction center heterodimer binds P680, the primary electron donor of PSII as well as several subsequent electron acceptors. This Pyropia yezoensis (Susabi-nori) protein is Photosystem II protein D1.